Consider the following 64-residue polypeptide: Putative neurotoxin 6 (64 aa).

An N-terminal signal peptide occupies residues 1–24; that stretch reads MKNKFAALVITLFVLVLAIDNVTT.

It belongs to the scolopendra neurotoxin 6 family. Contains 3 disulfide bonds. In terms of tissue distribution, expressed by the venom gland.

Its subcellular location is the secreted. The sequence is that of Putative neurotoxin 6 from Scolopendra mutilans (Chinese red-headed centipede).